Here is a 183-residue protein sequence, read N- to C-terminus: Shikimate kinase (183 aa).

Residue 14 to 19 participates in ATP binding; the sequence is GAGKTT. Position 18 (Thr18) interacts with Mg(2+). Residues Asp36, Arg60, and Gly82 each coordinate substrate. Residue Arg120 coordinates ATP. Residue Arg139 participates in substrate binding. Gln156 contacts ATP.

This sequence belongs to the shikimate kinase family. In terms of assembly, monomer. Mg(2+) serves as cofactor.

Its subcellular location is the cytoplasm. The enzyme catalyses shikimate + ATP = 3-phosphoshikimate + ADP + H(+). It participates in metabolic intermediate biosynthesis; chorismate biosynthesis; chorismate from D-erythrose 4-phosphate and phosphoenolpyruvate: step 5/7. In terms of biological role, catalyzes the specific phosphorylation of the 3-hydroxyl group of shikimic acid using ATP as a cosubstrate. This chain is Shikimate kinase, found in Thiobacillus denitrificans (strain ATCC 25259 / T1).